The primary structure comprises 365 residues: MTITGIIAEFNPFHNGHKYLLDQAEGLKIVAMSGNFMQRGEPAIVDKWTRAQMALENGADLVVELPFLVSVQAADFFGQGAVDILDRLGIDSLVFGTEEVRDYQKIADLYTEKGTEMEKFVENLPDSLSYPQKTQAMWKEFAGLDFSGNTPNHVLALAYAKAVAGRNIKLHPIQRQGAGYHSVNKDVDFASATALRQHQKDQDFLERFMPSVALFEQASKVIWEDYFPLLRYQILSNPDLTTIYQVNQEMAVRIKEAIKTAQSVEELVELVTTKRYTKARVRRLLTYILMQARENVLPEAIHVLGFTEKGRQHLKSLKGQVSLVSRIGKEPWDAMTQKADQIYQLGKPSIAEQNFGRVPIRIETN.

ATP-binding positions include 7–20, G96, N152, and R175; that span reads IAEF…HKYL.

Belongs to the TmcAL family.

Its subcellular location is the cytoplasm. It carries out the reaction cytidine(34) in elongator tRNA(Met) + acetate + ATP = N(4)-acetylcytidine(34) in elongator tRNA(Met) + AMP + diphosphate. Its function is as follows. Catalyzes the formation of N(4)-acetylcytidine (ac(4)C) at the wobble position of elongator tRNA(Met), using acetate and ATP as substrates. First activates an acetate ion to form acetyladenylate (Ac-AMP) and then transfers the acetyl group to tRNA to form ac(4)C34. The sequence is that of tRNA(Met) cytidine acetate ligase from Streptococcus pneumoniae (strain Taiwan19F-14).